We begin with the raw amino-acid sequence, 475 residues long: Gamma-aminobutyric acid receptor subunit gamma-2 (475 aa).

Residues 1 to 39 (MSSPNIWSTGSSVYSTPVFSQKMTVWILLLLSLYPGFTS) form the signal peptide. Residues 40–275 (QKSDDDYEDY…FDLSRRMGYF (236 aa)) lie on the Extracellular side of the membrane. Residues Asn-52 and Asn-129 are each glycosylated (N-linked (GlcNAc...) asparagine). Cys-190 and Cys-204 are disulfide-bonded. An N-linked (GlcNAc...) asparagine glycan is attached at Asn-247. The helical transmembrane segment at 276–296 (TIQTYIPCTLIVVLSWVSFWI) threads the bilayer. Residues 297 to 302 (NKDAVP) are Cytoplasmic-facing. A helical membrane pass occupies residues 303–322 (ARTSLGITTVLTMTTLSTIA). At 323-334 (RKSLPKVSYVTA) the chain is on the extracellular side. The helical transmembrane segment at 335 to 359 (MDLFVSVCFIFVFSALVEYGTLHYF) threads the bilayer. The Cytoplasmic portion of the chain corresponds to 360 to 451 (VSNRKPSKDK…IHIRIAKMDS (92 aa)). Positions 433 to 450 (RTGAWRHGRIHIRIAKMD) are interaction with GABARAP. Residues 452-472 (YARIFFPTAFCLFNLVYWVSY) form a helical membrane-spanning segment. Over 473 to 475 (LYL) the chain is Extracellular.

It belongs to the ligand-gated ion channel (TC 1.A.9) family. Gamma-aminobutyric acid receptor (TC 1.A.9.5) subfamily. GABRG2 sub-subfamily. As to quaternary structure, heteropentamer, formed by a combination of alpha (GABRA1-6), beta (GABRB1-3), gamma (GABRG1-3), delta (GABRD), epsilon (GABRE), rho (GABRR1-3), pi (GABRP) and theta (GABRQ) chains, each subunit exhibiting distinct physiological and pharmacological properties. Interacts with GABARAP. Interacts with KIF21B. Identified in a complex of 720 kDa composed of LHFPL4, NLGN2, GABRA1, GABRB2, GABRG2 and GABRB3. Interacts with LHFPL4. Interacts with SHISA7; interaction leads to the regulation of GABA(A) receptor trafficking, channel deactivation kinetics and pharmacology. Post-translationally, palmitoylated by ZDHHC3/GODZ; required for the accumulation of GABA(A) receptors at the postsynaptic membrane of inhibitory GABAergic synapses.

The protein localises to the postsynaptic cell membrane. The protein resides in the cell membrane. It is found in the cell projection. Its subcellular location is the dendrite. It localises to the cytoplasmic vesicle membrane. It carries out the reaction chloride(in) = chloride(out). With respect to regulation, allosterically activated by benzodiazepines. Activated by pentobarbital. Potentiated by etomidate, propofol, pregnanolone. Inhibited by the antagonist bicuculline. Inhibited by zinc ions. Potentiated by histamine. Gamma subunit of the heteropentameric ligand-gated chloride channel gated by gamma-aminobutyric acid (GABA), a major inhibitory neurotransmitter in the brain. GABA-gated chloride channels, also named GABA(A) receptors (GABAAR), consist of five subunits arranged around a central pore and contain GABA active binding site(s) located at the alpha and beta subunit interface(s). When activated by GABA, GABAARs selectively allow the flow of chloride anions across the cell membrane down their electrochemical gradient. Gamma-2/GABRG2-containing GABAARs are found at both synaptic and extrasynaptic sites. Chloride influx into the postsynaptic neuron following GABAAR opening decreases the neuron ability to generate a new action potential, thereby reducing nerve transmission. GABAARs containing alpha-1 and beta-2 or -3 subunits exhibit synaptogenic activity; the gamma-2 subunit being necessary but not sufficient to induce rapid synaptic contacts formation. Extrasynaptic gamma-2-containing receptors contribute to the tonic GABAergic inhibition. GABAARs function also as histamine receptor where histamine binds at the interface of two neighboring beta subunits and potentiates GABA response in a gamma-2 subunit-controlled manner. This chain is Gamma-aminobutyric acid receptor subunit gamma-2, found in Homo sapiens (Human).